A 141-amino-acid chain; its full sequence is Large ribosomal subunit protein uL13 (141 aa).

The protein belongs to the universal ribosomal protein uL13 family. In terms of assembly, part of the 50S ribosomal subunit.

This protein is one of the early assembly proteins of the 50S ribosomal subunit, although it is not seen to bind rRNA by itself. It is important during the early stages of 50S assembly. The chain is Large ribosomal subunit protein uL13 from Helicobacter pylori (strain P12).